The sequence spans 1446 residues: E3 ubiquitin-protein ligase listerin (1446 aa).

HEAT repeat units follow at residues 71 to 108 (QTRE…LTTD), 115 to 153 (MLTM…VTNG), 324 to 361 (SLQK…LLQK), 363 to 399 (ENPA…TFSD), 413 to 450 (EILK…WIIE), 630 to 669 (AENV…AEDE), 684 to 721 (GDFE…FCDA), 1046 to 1083 (LRAL…PAFQ), 1107 to 1144 (SVAR…KLSL), 1165 to 1202 (LLDL…NALN), and 1251 to 1289 (FKSM…RLLI). The RING-type zinc-finger motif lies at 1395-1442 (CTICMMTVHQQTHQLPKIKCKQCKNKFHSNCLYKWFESSNQSTCPLCR).

Belongs to the LTN1 family. As to quaternary structure, component of the ribosome quality control complex (RQC), composed of at least the E3 ubiquitin ligase ltn1 and nemf. The complex probably also contains tcf25 as well as vcp/p97 and its ubiquitin-binding cofactors. RQC forms a stable complex with 60S ribosomal subunits.

The protein resides in the cytoplasm. The protein localises to the cytosol. It catalyses the reaction S-ubiquitinyl-[E2 ubiquitin-conjugating enzyme]-L-cysteine + [acceptor protein]-L-lysine = [E2 ubiquitin-conjugating enzyme]-L-cysteine + N(6)-ubiquitinyl-[acceptor protein]-L-lysine.. Its pathway is protein modification; protein ubiquitination. Its function is as follows. E3 ubiquitin-protein ligase. Component of the ribosome quality control complex (RQC), a ribosome-associated complex that mediates ubiquitination and extraction of incompletely synthesized nascent chains for proteasomal degradation. Ubiquitination leads to vcp/p97 recruitment for extraction and degradation of the incomplete translation product. This Caenorhabditis elegans protein is E3 ubiquitin-protein ligase listerin.